Consider the following 194-residue polypeptide: Peroxynitrite isomerase 1 (194 aa).

The GXWXGXG signature appears at 40-46 (GVWRGEG). The heme b site is built by lysine 157 and histidine 184.

It belongs to the nitrobindin family. As to quaternary structure, homodimer. The cofactor is heme b.

It catalyses the reaction peroxynitrite = nitrate. It functions in the pathway nitrogen metabolism. Its function is as follows. Heme-binding protein able to scavenge peroxynitrite and to protect free L-tyrosine against peroxynitrite-mediated nitration, by acting as a peroxynitrite isomerase that converts peroxynitrite to nitrate. Therefore, this protein likely plays a role in peroxynitrite sensing and in the detoxification of reactive nitrogen and oxygen species (RNS and ROS, respectively). Is able to bind nitric oxide (NO) in vitro, but may act as a sensor of peroxynitrite levels in vivo. In Mycobacterium ulcerans (strain Agy99), this protein is Peroxynitrite isomerase 1.